The chain runs to 202 residues: MSRYRGPRLRVVRRLGELPGLSRKTPRRAYPPGQHGQGRRKRSEYAIRLEEKQKLLYNYGVTEKQLVRYMKKARRSTDSTGQKLLELLEMRLDNTVFRLGMAGTIPGARQLVNHGHVIVNGRVVNIASYQCRPGDVISVRNKDNSRRMVETNMQYPGLANLPDHLEFDKNTLTGKVNDVIKREWVALQINELLVVEYYSRKV.

A disordered region spans residues 16-43 (GELPGLSRKTPRRAYPPGQHGQGRRKRS). An S4 RNA-binding domain is found at 90 to 152 (MRLDNTVFRL…DNSRRMVETN (63 aa)).

This sequence belongs to the universal ribosomal protein uS4 family. In terms of assembly, part of the 30S ribosomal subunit. Contacts protein S5. The interaction surface between S4 and S5 is involved in control of translational fidelity.

Its function is as follows. One of the primary rRNA binding proteins, it binds directly to 16S rRNA where it nucleates assembly of the body of the 30S subunit. In terms of biological role, with S5 and S12 plays an important role in translational accuracy. The protein is Small ribosomal subunit protein uS4 of Crocosphaera subtropica (strain ATCC 51142 / BH68) (Cyanothece sp. (strain ATCC 51142)).